Here is a 446-residue protein sequence, read N- to C-terminus: MKKIYIKTFGCQMNEYDSDKMADVLNAAEGLTPTSTPEDADVILFNTCSVREKAQEKVFHDLGRVRHLKQANPNLIIGVGGCVASQEGAAIVARAPFVDVVFGPQTLHRLPELIAQRRETGRAQVDISFPEIEKFDHLPPARVEGGAAFVSIMEGCSKYCTFCVVPYTRGEEVSRPFDDVIAEVANLAARGVKEITLLGQNVNAYQGALDEGGTADFAFLLEMVHEIPGVERIRYTTSHPREMTQRLIECYGKLPKLVSHLHLPVQSGSDRILAAMKRGHTVLEFKSIVRKLREQRSDLCLSSDFIVGFPGETGADFEATMKLVEELNFDASFSFIYSKRPGTPAADYADDVSAELKTQRLMRLQARIEAQAQGVNRSMVGSVQRVLVEGQARKNANELAGRTGNNRIVNFAGPSRLLGQFVDVTITQALPHSLRGEAVTLETLHT.

The region spanning 2-119 (KKIYIKTFGC…LPELIAQRRE (118 aa)) is the MTTase N-terminal domain. [4Fe-4S] cluster-binding residues include Cys11, Cys48, Cys82, Cys156, Cys160, and Cys163. Residues 142–376 (RVEGGAAFVS…RIEAQAQGVN (235 aa)) enclose the Radical SAM core domain. The 64-residue stretch at 377-440 (RSMVGSVQRV…PHSLRGEAVT (64 aa)) folds into the TRAM domain.

The protein belongs to the methylthiotransferase family. MiaB subfamily. In terms of assembly, monomer. Requires [4Fe-4S] cluster as cofactor.

Its subcellular location is the cytoplasm. The enzyme catalyses N(6)-dimethylallyladenosine(37) in tRNA + (sulfur carrier)-SH + AH2 + 2 S-adenosyl-L-methionine = 2-methylsulfanyl-N(6)-dimethylallyladenosine(37) in tRNA + (sulfur carrier)-H + 5'-deoxyadenosine + L-methionine + A + S-adenosyl-L-homocysteine + 2 H(+). Catalyzes the methylthiolation of N6-(dimethylallyl)adenosine (i(6)A), leading to the formation of 2-methylthio-N6-(dimethylallyl)adenosine (ms(2)i(6)A) at position 37 in tRNAs that read codons beginning with uridine. The polypeptide is tRNA-2-methylthio-N(6)-dimethylallyladenosine synthase (Thiobacillus denitrificans (strain ATCC 25259 / T1)).